The following is a 249-amino-acid chain: Enolase-phosphatase E1 (249 aa).

The protein belongs to the HAD-like hydrolase superfamily. MasA/MtnC family. Monomer. The cofactor is Mg(2+).

It carries out the reaction 5-methylsulfanyl-2,3-dioxopentyl phosphate + H2O = 1,2-dihydroxy-5-(methylsulfanyl)pent-1-en-3-one + phosphate. The protein operates within amino-acid biosynthesis; L-methionine biosynthesis via salvage pathway; L-methionine from S-methyl-5-thio-alpha-D-ribose 1-phosphate: step 3/6. It functions in the pathway amino-acid biosynthesis; L-methionine biosynthesis via salvage pathway; L-methionine from S-methyl-5-thio-alpha-D-ribose 1-phosphate: step 4/6. In terms of biological role, bifunctional enzyme that catalyzes the enolization of 2,3-diketo-5-methylthiopentyl-1-phosphate (DK-MTP-1-P) into the intermediate 2-hydroxy-3-keto-5-methylthiopentenyl-1-phosphate (HK-MTPenyl-1-P), which is then dephosphorylated to form the acireductone 1,2-dihydroxy-3-keto-5-methylthiopentene (DHK-MTPene). This is Enolase-phosphatase E1 from Synechococcus sp. (strain RCC307).